Consider the following 612-residue polypeptide: MYKKNISNIFLLPNDILKRIYICNKKKKLIPHSFLINLFQKQIGYPKSFANLNWAFSKIIKWYYDRGYQWSLVEVKQASDASSIVIDIHEGVVKTIITEYYTLSYKRVSGILCVESIEQYLGVRVGAPLNIIDLQKKITYLKDNQLVGDIIYSIERSNNSSMSLDIKFQIQELKDKEIIVLAESSSIISHACNLLNQYRNRLVASNIVSLSTNKLHACYFNYKLDYQYKYINTSNLIKLLAYSISCRKTLLIHYFNLQTLISCTKKNTIGFQLYLRNLSFGKAFCVLSMKFIKNGLNIKILYINPSLIVDQNFVFQFAIQIIKQYHTAKPPALFLTNLDLEQYVAESLLMYHFTSCFSISEKILLSRIMHTDSLFFNSENFHFDDRTNAINSYDTFKQNTKIFYQEFLSLLLSLRYQNFTYLGWPLKGHFFEIKSLYLAPFQKSDFSDSRKTLFFHKMSLKQVSNFNLPVSFKSHLNHILVSTIKCQSNLNMRTVSLLLIDSPAEYLLYKSILNFSIKVRMQYFIPMSNNIRLSLFYNYLDCFLIRSSQSCIHIWQDLRTLTPIQNFWLKKFSYGAGIQLKLPIKQMPPLSIEYTVTSSRYFCIYLRTYYQR.

The protein localises to the plastid. The protein resides in the chloroplast. This is an uncharacterized protein from Pyropia yezoensis (Susabi-nori).